We begin with the raw amino-acid sequence, 339 residues long: Foldase protein PrsA (339 aa).

A signal peptide spans 1 to 26 (MKHLKNNTKKFTALLFALLFSMSIAG). Cys27 carries the N-palmitoyl cysteine lipid modification. Residue Cys27 is the site of S-diacylglycerol cysteine attachment. The PpiC domain occupies 197–287 (KPTFHAQHVL…FGYHVIKLID (91 aa)).

It belongs to the PrsA family.

It localises to the cell membrane. The enzyme catalyses [protein]-peptidylproline (omega=180) = [protein]-peptidylproline (omega=0). In terms of biological role, plays a major role in protein secretion by helping the post-translocational extracellular folding of several secreted proteins. The chain is Foldase protein PrsA from Clostridium tetani (strain Massachusetts / E88).